Here is a 373-residue protein sequence, read N- to C-terminus: 4-hydroxy-3-methylbut-2-en-1-yl diphosphate synthase (flavodoxin) (373 aa).

Residues Cys270, Cys273, Cys305, and Glu312 each coordinate [4Fe-4S] cluster.

The protein belongs to the IspG family. It depends on [4Fe-4S] cluster as a cofactor.

The enzyme catalyses (2E)-4-hydroxy-3-methylbut-2-enyl diphosphate + oxidized [flavodoxin] + H2O + 2 H(+) = 2-C-methyl-D-erythritol 2,4-cyclic diphosphate + reduced [flavodoxin]. It functions in the pathway isoprenoid biosynthesis; isopentenyl diphosphate biosynthesis via DXP pathway; isopentenyl diphosphate from 1-deoxy-D-xylulose 5-phosphate: step 5/6. Its function is as follows. Converts 2C-methyl-D-erythritol 2,4-cyclodiphosphate (ME-2,4cPP) into 1-hydroxy-2-methyl-2-(E)-butenyl 4-diphosphate. The polypeptide is 4-hydroxy-3-methylbut-2-en-1-yl diphosphate synthase (flavodoxin) (Klebsiella pneumoniae subsp. pneumoniae (strain ATCC 700721 / MGH 78578)).